Reading from the N-terminus, the 294-residue chain is ATP synthase gamma chain (294 aa).

The protein belongs to the ATPase gamma chain family. F-type ATPases have 2 components, CF(1) - the catalytic core - and CF(0) - the membrane proton channel. CF(1) has five subunits: alpha(3), beta(3), gamma(1), delta(1), epsilon(1). CF(0) has three main subunits: a, b and c.

Its subcellular location is the cell inner membrane. Produces ATP from ADP in the presence of a proton gradient across the membrane. The gamma chain is believed to be important in regulating ATPase activity and the flow of protons through the CF(0) complex. The polypeptide is ATP synthase gamma chain (Nitratiruptor sp. (strain SB155-2)).